A 660-amino-acid polypeptide reads, in one-letter code: MPDSIVHVKKGQRFLDVIKDKNVVAVKIDSVLHDLRDVAERDVDAIPVSVYSDDGLYILRHSAAHLLANAVTNLYPDALPNTGPVVENGFYYDFDMKPIGEEDLAKIEDEMRRIQKENVPIERIVYQKADLLRIFAKNPYKIRIIEDNVSDASSVYRQGNFVDLCLGPHVPSTGYIKAFKLLNIASAVYKHDESKTLVRIYGTAFPDEKLLKQYLNNLEEAKRRDHRRIIAEMDLAVFNSEWAPGFPLYTQYGQTIRKELLSYMDSMNRKNGWFDVWTPHVFRDTIWKQSGHYAKYRPNMYLFTLPDGDSYGIKPMNCPGHIAIFSRRKYSYRDLPVRYSEPGTVYRYEKSGEVGGLTRPRAFTQDDGHAFLRMDQIGDEIRTLLTMVKDVFTILFGNIELSFDLSVIDRDHPENYLVSYVCRNCGYRIEGARGTDIECPVCHSHDLEPDLSVWDNATEQLRDALKSMGIEYKEYPGEAAFYGPKIDVHVKDAIGRMWQLSTIQLDFFMPVNFGLTYTNSEGKEDRVVMIHRAIYGSYERVMAILLEHYAGKLPTWLTPIQTYVVPISSNFDEYARHVHEELIRHGIRSEIDTSQETVSKKIKLIHPYRPAYIIVVGSKEMETNSVTARNREGKSKTYSLSEFIDVVKKEIEQRKVDQAF.

Positions 1 to 49 (MPDSIVHVKKGQRFLDVIKDKNVVAVKIDSVLHDLRDVAERDVDAIPVS) constitute a TGS domain. Positions 225–554 (DHRRIIAEMD…LLEHYAGKLP (330 aa)) are catalytic. Cysteine 318, histidine 369, and histidine 531 together coordinate Zn(2+).

This sequence belongs to the class-II aminoacyl-tRNA synthetase family. In terms of assembly, homodimer. The cofactor is Zn(2+).

The protein resides in the cytoplasm. The enzyme catalyses tRNA(Thr) + L-threonine + ATP = L-threonyl-tRNA(Thr) + AMP + diphosphate + H(+). Its function is as follows. Catalyzes the attachment of threonine to tRNA(Thr) in a two-step reaction: L-threonine is first activated by ATP to form Thr-AMP and then transferred to the acceptor end of tRNA(Thr). This is Threonine--tRNA ligase from Thermoplasma acidophilum (strain ATCC 25905 / DSM 1728 / JCM 9062 / NBRC 15155 / AMRC-C165).